The following is a 222-amino-acid chain: Noggin (222 aa).

Positions 1 to 19 (MDHSQCLVTIYALMVFLGL) are cleaved as a signal peptide. Residue Asn61 is glycosylated (N-linked (GlcNAc...) asparagine). 4 disulfides stabilise this stretch: Cys145–Cys182, Cys168–Cys218, Cys174–Cys220, and Cys197–Cys205.

Belongs to the noggin family. As to quaternary structure, homodimer.

It is found in the secreted. Patterns the embryo by interrupting bone morphogenetic proteins (BMP) signaling. Binds BMP-4 and BMP-2 with high affinity. Can abolish BMP-4 activity by blocking binding to cognate cell-surface receptors. Capable of inducing dorsal development in embryos. Causes dorsal mesodermal differentiation of animal cap ectoderm when coexpressed with xWNT-8 and nuclear, sequence-specific DNA-binding protein xBRA. None of these molecules causes dorsal mesoderm formation when expressed alone. This is Noggin (nog) from Xenopus laevis (African clawed frog).